Reading from the N-terminus, the 762-residue chain is 5-methyltetrahydropteroyltriglutamate--homocysteine methyltransferase (762 aa).

5-methyltetrahydropteroyltri-L-glutamate is bound by residues 17–20 (REWK) and Lys111. Residues 435–437 (IGS) and Glu488 each bind L-homocysteine. L-methionine contacts are provided by residues 435–437 (IGS) and Glu488. Residues 519 to 520 (RC) and Trp565 each bind 5-methyltetrahydropteroyltri-L-glutamate. Asp603 contributes to the L-homocysteine binding site. An L-methionine-binding site is contributed by Asp603. Glu609 is a binding site for 5-methyltetrahydropteroyltri-L-glutamate. Positions 645, 647, and 669 each coordinate Zn(2+). His698 acts as the Proton donor in catalysis. Cys730 contributes to the Zn(2+) binding site.

This sequence belongs to the vitamin-B12 independent methionine synthase family. Requires Zn(2+) as cofactor.

It catalyses the reaction 5-methyltetrahydropteroyltri-L-glutamate + L-homocysteine = tetrahydropteroyltri-L-glutamate + L-methionine. It functions in the pathway amino-acid biosynthesis; L-methionine biosynthesis via de novo pathway; L-methionine from L-homocysteine (MetE route): step 1/1. Catalyzes the transfer of a methyl group from 5-methyltetrahydrofolate to homocysteine resulting in methionine formation. The sequence is that of 5-methyltetrahydropteroyltriglutamate--homocysteine methyltransferase from Bacillus mycoides (strain KBAB4) (Bacillus weihenstephanensis).